The chain runs to 155 residues: Protein-export protein SecB (155 aa).

Belongs to the SecB family. Homotetramer, a dimer of dimers. One homotetramer interacts with 1 SecA dimer.

The protein resides in the cytoplasm. One of the proteins required for the normal export of preproteins out of the cell cytoplasm. It is a molecular chaperone that binds to a subset of precursor proteins, maintaining them in a translocation-competent state. It also specifically binds to its receptor SecA. The polypeptide is Protein-export protein SecB (Paramagnetospirillum magneticum (strain ATCC 700264 / AMB-1) (Magnetospirillum magneticum)).